The primary structure comprises 95 residues: Osteocalcin 1 (95 aa).

The signal sequence occupies residues 1-21 (MKTLSVLVLCSLAVLCLTSDA). The propeptide occupies 22–50 (SFSSQPAVDTPAQEGLFVEQEQASSVVRQ). In terms of domain architecture, Gla spans 45–91 (SSVVRQAPKELSLSQLESLREVCELNLACEDMMDTSGIIAAYTTYYG). The Ca(2+) site is built by Glu-61, Glu-65, and Glu-68. 3 positions are modified to 4-carboxyglutamate: Glu-61, Glu-65, and Glu-68. Cysteines 67 and 73 form a disulfide.

Belongs to the osteocalcin/matrix Gla protein family. Gamma-carboxyglutamate residues are formed by vitamin K dependent carboxylation by GGCX. These residues are essential for the binding of calcium.

Its subcellular location is the secreted. Its function is as follows. The carboxylated form is one of the main organic components of the bone matrix, which constitutes 1-2% of the total bone protein. The carboxylated form binds strongly to apatite and calcium. The sequence is that of Osteocalcin 1 from Solea senegalensis (Senegalese sole).